The primary structure comprises 156 residues: Cell division protein SepF (156 aa).

Positions 30 to 49 (NAAAPSTTETSVVRQDDRPK) are disordered.

Belongs to the SepF family. Homodimer. Interacts with FtsZ.

The protein resides in the cytoplasm. Its function is as follows. Cell division protein that is part of the divisome complex and is recruited early to the Z-ring. Probably stimulates Z-ring formation, perhaps through the cross-linking of FtsZ protofilaments. Its function overlaps with FtsA. The sequence is that of Cell division protein SepF from Exiguobacterium sp. (strain ATCC BAA-1283 / AT1b).